An 86-amino-acid chain; its full sequence is Small ribosomal subunit protein bS20 (86 aa).

The tract at residues 1-25 (MANIKSQIKRNKQNEKRHERNKAVK) is disordered. Basic and acidic residues predominate over residues 12-22 (KQNEKRHERNK).

Belongs to the bacterial ribosomal protein bS20 family.

Its function is as follows. Binds directly to 16S ribosomal RNA. The polypeptide is Small ribosomal subunit protein bS20 (Nocardioides sp. (strain ATCC BAA-499 / JS614)).